We begin with the raw amino-acid sequence, 62 residues long: Conotoxin Lt5.5 (62 aa).

The N-terminal stretch at 1–22 (MRCLQVFIIFLLLIPSPPSVDA) is a signal peptide. A propeptide spanning residues 23 to 48 (QRKTKDDVPLASFHDNAKRTLKRLWN) is cleaved from the precursor.

Belongs to the conotoxin T superfamily. Post-translationally, contains 2 disulfide bonds that can be either 'C1-C3, C2-C4' or 'C1-C4, C2-C3', since these disulfide connectivities have been observed for conotoxins with cysteine framework V (for examples, see AC P0DQQ7 and AC P81755). Expressed by the venom duct.

The protein resides in the secreted. The polypeptide is Conotoxin Lt5.5 (Conus litteratus (Lettered cone)).